Consider the following 253-residue polypeptide: N-acetylglucosaminyl-phosphatidylinositol de-N-acetylase (253 aa).

The chain crosses the membrane as a helical span at residues 3–23 (VAAPLLCLAAAVLVWGVLWVW). Residues 24-253 (GSWERMTRPE…YMRINSLNFL (230 aa)) are Cytoplasmic-facing.

It belongs to the PIGL family.

The protein localises to the endoplasmic reticulum membrane. The catalysed reaction is a 6-(N-acetyl-alpha-D-glucosaminyl)-1-(1,2-diacyl-sn-glycero-3-phospho)-1D-myo-inositol + H2O = a 6-(alpha-D-glucosaminyl)-1-(1,2-diacyl-sn-glycero-3-phospho)-1D-myo-inositol + acetate. It participates in glycolipid biosynthesis; glycosylphosphatidylinositol-anchor biosynthesis. Its function is as follows. Catalyzes the second step of glycosylphosphatidylinositol (GPI) biosynthesis, which is the de-N-acetylation of N-acetylglucosaminyl-phosphatidylinositol. This is N-acetylglucosaminyl-phosphatidylinositol de-N-acetylase (PIGL) from Bos taurus (Bovine).